Reading from the N-terminus, the 406-residue chain is 4-hydroxy-3-methylbut-2-en-1-yl diphosphate synthase (ferredoxin) (406 aa).

[4Fe-4S] cluster contacts are provided by Cys-313, Cys-316, Cys-347, and Glu-354.

The protein belongs to the IspG family. The cofactor is [4Fe-4S] cluster.

The catalysed reaction is (2E)-4-hydroxy-3-methylbut-2-enyl diphosphate + 2 oxidized [2Fe-2S]-[ferredoxin] + H2O = 2-C-methyl-D-erythritol 2,4-cyclic diphosphate + 2 reduced [2Fe-2S]-[ferredoxin] + H(+). It functions in the pathway isoprenoid biosynthesis; isopentenyl diphosphate biosynthesis via DXP pathway; isopentenyl diphosphate from 1-deoxy-D-xylulose 5-phosphate: step 5/6. Its function is as follows. Converts 2C-methyl-D-erythritol 2,4-cyclodiphosphate (ME-2,4cPP) into 1-hydroxy-2-methyl-2-(E)-butenyl 4-diphosphate. This Picosynechococcus sp. (strain ATCC 27264 / PCC 7002 / PR-6) (Agmenellum quadruplicatum) protein is 4-hydroxy-3-methylbut-2-en-1-yl diphosphate synthase (ferredoxin).